Here is a 172-residue protein sequence, read N- to C-terminus: MEEKKKKSIGFNIIKSDPTDGHGGFGVGALSLDNISPVFVDVEEKEAFVDIGAMHARSTVEKGIKFLPNKEEVPNGKPYWLVWVTIDRKEEGPYYAGVTACEMTVDRSIRRGYKSLPEHVNLMDKSMKRKIIVDKMDDSSKRVLGEFLKKHDQGLWDRSSDELKTSLLPENN.

This is an uncharacterized protein from Bacillus subtilis (strain 168).